Reading from the N-terminus, the 505-residue chain is Alpha-1-syntrophin (505 aa).

Disordered regions lie at residues 1-25 (MASGRRAPRTGLLELRAGAGSGAGG) and 40-77 (LTVSPADGDPGPEPGAPREQEPAQLNGAAEPGAGPPQL). 2 PH domains span residues 6-269 (RAPR…AQVN) and 293-401 (DIKQ…DGCH). Residues 87–170 (RVTVRKADAG…EVVLEVKYMK (84 aa)) form the PDZ domain. Phosphoserine is present on residues S101, S184, S189, S193, and S200. The interval 180–210 (TGGTSVGWDSPPASPLQRQPSSPGPTPRNFS) is disordered. The region spanning 449–505 (PFEKLQMSSDDGASLLFLDFGGAEGEIQLDLHSCPKTIVFIIHSFLSAKVTRLGLLA) is the SU domain. A calmodulin-binding region spans residues 483-505 (PKTIVFIIHSFLSAKVTRLGLLA).

This sequence belongs to the syntrophin family. In terms of assembly, monomer and homodimer. Interacts with the other members of the syntrophin family SNTB1 and SNTB2; SGCG and SGCA of the dystrophin glycoprotein complex; NOS1; GRB2; the sodium channel proteins SCN4A and SCN5A; F-actin and calmodulin. Interacts with dystrophin protein DMD and related proteins DTNA and UTRN and with MAPK12, TGFA and GA. Interacts with MYOC; regulates muscle hypertrophy. Interacts with DTNB. Post-translationally, phosphorylated by CaM-kinase II. Phosphorylation may inhibit the interaction with DMD. As to expression, high expression in skeletal muscle and heart. Low expression in brain, pancreas, liver, kidney and lung. Not detected in placenta.

The protein localises to the cell membrane. The protein resides in the sarcolemma. It is found in the cell junction. Its subcellular location is the cytoplasm. It localises to the cytoskeleton. In terms of biological role, adapter protein that binds to and probably organizes the subcellular localization of a variety of membrane proteins. May link various receptors to the actin cytoskeleton and the extracellular matrix via the dystrophin glycoprotein complex. Plays an important role in synapse formation and in the organization of UTRN and acetylcholine receptors at the neuromuscular synapse. Binds to phosphatidylinositol 4,5-bisphosphate. The chain is Alpha-1-syntrophin (SNTA1) from Homo sapiens (Human).